We begin with the raw amino-acid sequence, 37 residues long: Large ribosomal subunit protein bL36 (37 aa).

This sequence belongs to the bacterial ribosomal protein bL36 family.

The chain is Large ribosomal subunit protein bL36 from Vibrio atlanticus (strain LGP32) (Vibrio splendidus (strain Mel32)).